We begin with the raw amino-acid sequence, 64 residues long: Large ribosomal subunit protein bL35 (64 aa).

Residues 1–64 form a disordered region; it reads MPKNKTNSGA…RKSIKKLLGK (64 aa).

Belongs to the bacterial ribosomal protein bL35 family.

This is Large ribosomal subunit protein bL35 from Beutenbergia cavernae (strain ATCC BAA-8 / DSM 12333 / CCUG 43141 / JCM 11478 / NBRC 16432 / NCIMB 13614 / HKI 0122).